A 311-amino-acid polypeptide reads, in one-letter code: Putative prophage capsid protein YqbE (311 aa).

This sequence belongs to the encapsulin family. Family 3 subfamily.

Its function is as follows. Possibly a prophage capsid protein. The chain is Putative prophage capsid protein YqbE (yqbE) from Bacillus subtilis (strain 168).